Consider the following 352-residue polypeptide: tRNA pseudouridine synthase D (352 aa).

D81 acts as the Nucleophile in catalysis. The TRUD domain occupies 157 to 303; sequence GVPNYFGGQR…MSHERRILRL (147 aa).

This sequence belongs to the pseudouridine synthase TruD family.

The enzyme catalyses uridine(13) in tRNA = pseudouridine(13) in tRNA. Responsible for synthesis of pseudouridine from uracil-13 in transfer RNAs. The sequence is that of tRNA pseudouridine synthase D from Pseudomonas putida (strain W619).